The primary structure comprises 157 residues: Baculoviral IAP repeat-containing protein 5.2-B (157 aa).

One copy of the BIR repeat lies at 31–101 (RLRTFSNWPF…KHSPSCLFIA (71 aa)). Phosphothreonine; by CDK1 is present on T47. Zn(2+) is bound by residues C70, C73, H90, and C97.

The protein belongs to the IAP family. As to quaternary structure, component of the CPC at least composed of survivin/birc5, incenp, cdca8/borealin and/or cdca9/dasra-A, and aurkb/aurora-B. Interacts directly with incenp (via N-terminus). Interacts with rxra; the interaction is stronger in the absence of 9-cis retinoic acids. Ubiquitination is required for centrosome-targeting. Exhibits strong and homogeneous expression in developing oocytes. In embryos, expressed in the animal hemisphere from one-cell to yolk plug stages, and highly expressed in the future brain and dorsal region of the neural tube at the neurula stage and early tail-bud stage. At tadpole stages, expression is restricted at a low level to the head region.

It is found in the cytoplasm. The protein localises to the nucleus. It localises to the chromosome. Its subcellular location is the centromere. The protein resides in the cytoskeleton. It is found in the spindle. Functionally, does not appear to exhibit anti-apoptotic activity. Plays a role in increasing blood vessel size during development. Component of the chromosomal passenger complex (CPC), a complex that acts as a key regulator of mitosis. The CPC complex has essential functions at the centromere in ensuring correct chromosome alignment and segregation and is required for chromatin-induced microtubule stabilization and spindle assembly. This is Baculoviral IAP repeat-containing protein 5.2-B (birc5.2-b) from Xenopus laevis (African clawed frog).